Consider the following 416-residue polypeptide: Probable glucan 1,3-beta-glucosidase A (416 aa).

The first 21 residues, 1–21 (MLYNLSKAVLALSVLAASADA), serve as a signal peptide directing secretion. The Proton donor role is filled by Glu-209. 2 disulfide bridges follow: Cys-290/Cys-415 and Cys-316/Cys-341. The active-site Nucleophile is Glu-308.

This sequence belongs to the glycosyl hydrolase 5 (cellulase A) family. In terms of assembly, monomer. Mn(2+) serves as cofactor.

The protein resides in the secreted. It carries out the reaction Successive hydrolysis of beta-D-glucose units from the non-reducing ends of (1-&gt;3)-beta-D-glucans, releasing alpha-glucose.. Beta-glucanases participate in the metabolism of beta-glucan, the main structural component of the cell wall. It could also function biosynthetically as a transglycosylase. The chain is Probable glucan 1,3-beta-glucosidase A (exgA) from Aspergillus terreus (strain NIH 2624 / FGSC A1156).